Reading from the N-terminus, the 287-residue chain is Protease HtpX homolog (287 aa).

The next 2 helical transmembrane spans lie at 5–25 (IRTG…GYWI) and 28–48 (GAGA…AYWV). Zn(2+) is bound at residue H131. The active site involves E132. H135 is a Zn(2+) binding site. The next 2 helical transmembrane spans lie at 146–166 (VTAT…FFGG) and 174–194 (PFAG…ATLV). Zn(2+) is bound at residue E203.

Belongs to the peptidase M48B family. The cofactor is Zn(2+).

It localises to the cell inner membrane. The sequence is that of Protease HtpX homolog from Acidiphilium cryptum (strain JF-5).